Reading from the N-terminus, the 94-residue chain is UPF0298 protein SEQ_1830 (94 aa).

It belongs to the UPF0298 family.

The protein localises to the cytoplasm. In Streptococcus equi subsp. equi (strain 4047), this protein is UPF0298 protein SEQ_1830.